A 568-amino-acid chain; its full sequence is Clathrin coat assembly protein AP180B (568 aa).

Residues 1–127 (MSSLYTKLVK…EEYGRLGMDH (127 aa)) enclose the ENTH domain. A compositionally biased stretch (basic and acidic residues) spans 262 to 283 (HLREETKRQRGEPSEPQQDRKP). Residues 262–302 (HLREETKRQRGEPSEPQQDRKPSTAISSTSSHNNNSNDKNK) are disordered. Lys-282 is covalently cross-linked (Glycyl lysine isopeptide (Lys-Gly) (interchain with G-Cter in ubiquitin)). Over residues 284 to 298 (STAISSTSSHNNNSN) the composition is skewed to low complexity. Thr-449 is modified (phosphothreonine).

It belongs to the AP180 family. In terms of assembly, interacts with PAN1 and the clathrin heavy and light chains CHC1 and CLC1.

The protein localises to the bud. It localises to the bud neck. The protein resides in the cell membrane. Its subcellular location is the cytoplasm. In terms of biological role, involved in endocytosis and clathrin cage assembly. The chain is Clathrin coat assembly protein AP180B (YAP1802) from Saccharomyces cerevisiae (strain ATCC 204508 / S288c) (Baker's yeast).